A 389-amino-acid chain; its full sequence is Chalcone synthase 9 (389 aa).

Cysteine 164 is an active-site residue.

This sequence belongs to the thiolase-like superfamily. Chalcone/stilbene synthases family.

It catalyses the reaction (E)-4-coumaroyl-CoA + 3 malonyl-CoA + 3 H(+) = 2',4,4',6'-tetrahydroxychalcone + 3 CO2 + 4 CoA. The protein operates within secondary metabolite biosynthesis; flavonoid biosynthesis. Its function is as follows. The primary product of this enzyme is 4,2',4',6'-tetrahydroxychalcone (also termed naringenin-chalcone or chalcone) which can under specific conditions spontaneously isomerize into naringenin. In Medicago sativa (Alfalfa), this protein is Chalcone synthase 9 (CHS9).